Consider the following 400-residue polypeptide: Arabinan endo-1,5-alpha-L-arabinosidase B (400 aa).

The first 16 residues, 1–16 (MAVIFVLFFLVSMALS), serve as a signal peptide directing secretion. A glycan (N-linked (GlcNAc...) asparagine) is linked at N24. The Proton acceptor role is filled by D70. N-linked (GlcNAc...) asparagine glycosylation occurs at N184. The Proton donor role is filled by E277. Residue N372 is glycosylated (N-linked (GlcNAc...) asparagine).

Belongs to the glycosyl hydrolase 43 family.

The protein resides in the secreted. It catalyses the reaction Endohydrolysis of (1-&gt;5)-alpha-arabinofuranosidic linkages in (1-&gt;5)-arabinans.. It functions in the pathway glycan metabolism; L-arabinan degradation. Its function is as follows. Endo-1,5-alpha-L-arabinanase involved in degradation of pectin. Its preferred substrate is linear 1,5-alpha-L-arabinan. The sequence is that of Arabinan endo-1,5-alpha-L-arabinosidase B (abnB) from Emericella nidulans (strain FGSC A4 / ATCC 38163 / CBS 112.46 / NRRL 194 / M139) (Aspergillus nidulans).